Here is a 142-residue protein sequence, read N- to C-terminus: Large ribosomal subunit protein uL11 (142 aa).

It belongs to the universal ribosomal protein uL11 family. As to quaternary structure, part of the ribosomal stalk of the 50S ribosomal subunit. Interacts with L10 and the large rRNA to form the base of the stalk. L10 forms an elongated spine to which L12 dimers bind in a sequential fashion forming a multimeric L10(L12)X complex. One or more lysine residues are methylated.

Its function is as follows. Forms part of the ribosomal stalk which helps the ribosome interact with GTP-bound translation factors. The chain is Large ribosomal subunit protein uL11 from Xanthomonas campestris pv. campestris (strain 8004).